The primary structure comprises 460 residues: Arginine biosynthesis bifunctional protein ArgJ, chloroplastic (460 aa).

The transit peptide at 1-26 directs the protein to the chloroplast; that stretch reads MYLSVPHYPSLKFTAFQSHKRNFRVF. Substrate contacts are provided by Thr202, Lys228, Thr239, Glu328, Asn455, and Thr460. The Nucleophile role is filled by Thr239.

Belongs to the ArgJ family. In terms of assembly, heterodimer of an alpha and a beta chain.

The protein localises to the plastid. It localises to the chloroplast. It carries out the reaction N(2)-acetyl-L-ornithine + L-glutamate = N-acetyl-L-glutamate + L-ornithine. The catalysed reaction is L-glutamate + acetyl-CoA = N-acetyl-L-glutamate + CoA + H(+). The protein operates within amino-acid biosynthesis; L-arginine biosynthesis; L-ornithine and N-acetyl-L-glutamate from L-glutamate and N(2)-acetyl-L-ornithine (cyclic): step 1/1. It participates in amino-acid biosynthesis; L-arginine biosynthesis; N(2)-acetyl-L-ornithine from L-glutamate: step 1/4. Functionally, catalyzes two activities which are involved in the cyclic version of arginine biosynthesis: the synthesis of acetylglutamate from glutamate and acetyl-CoA, and of ornithine by transacetylation between acetylornithine and glutamate. In Citrullus lanatus (Watermelon), this protein is Arginine biosynthesis bifunctional protein ArgJ, chloroplastic.